Reading from the N-terminus, the 97-residue chain is Citrate lyase acyl carrier protein (97 aa).

Ser14 is modified (O-(phosphoribosyl dephospho-coenzyme A)serine).

Belongs to the CitD family. In terms of assembly, oligomer with a subunit composition of (alpha,beta,gamma)6.

The protein resides in the cytoplasm. Functionally, covalent carrier of the coenzyme of citrate lyase. The polypeptide is Citrate lyase acyl carrier protein (Oenococcus oeni (strain ATCC BAA-331 / PSU-1)).